Here is a 274-residue protein sequence, read N- to C-terminus: uncharacterized protein (274 aa).

Residues 1–30 (MTIDTPAREDQTLAATHRAMWALGDYALMA) form the signal peptide.

The protein to M.tuberculosis Rv1403c.

This is an uncharacterized protein from Mycobacterium bovis (strain ATCC BAA-935 / AF2122/97).